The sequence spans 180 residues: Inner membrane-spanning protein YciB (180 aa).

5 helical membrane-spanning segments follow: residues Gln25–Ile45, Val49–Ile69, Ile76–Ile96, Ile118–Val138, and Phe150–Leu170.

This sequence belongs to the YciB family.

It is found in the cell inner membrane. Its function is as follows. Plays a role in cell envelope biogenesis, maintenance of cell envelope integrity and membrane homeostasis. The protein is Inner membrane-spanning protein YciB of Rickettsia felis (strain ATCC VR-1525 / URRWXCal2) (Rickettsia azadi).